We begin with the raw amino-acid sequence, 227 residues long: Cytidylate kinase (227 aa).

Residue 7–15 (GPAGSGKST) participates in ATP binding.

It belongs to the cytidylate kinase family. Type 1 subfamily.

The protein resides in the cytoplasm. The enzyme catalyses CMP + ATP = CDP + ADP. The catalysed reaction is dCMP + ATP = dCDP + ADP. The polypeptide is Cytidylate kinase (Salinibacter ruber (strain DSM 13855 / M31)).